The sequence spans 342 residues: MKQDVVELDGAIGGGQVLRSALSLSMLTGKTLRIHNIRARRSRPGLLRQHLTAVLAAAQVCGARSTGAELGSQVLSFEPGPIRGGDYRFAIGTAGSCTLVLQTLLPALLRAPQPSRVSISGGTHNPLAPPVDFLQQAWLPQLRRMGGRVELQLLRHGFVPAGGGELEAFIQPSELQPLHLQERGALLGSRAWALSAGLPEHVAERELRRVHDRLQLPREQLTPVLLDEEYGPGNVLLLEFAFEHLTELFCGFGQNSLRAEKVADGAIDQARDWLDSGAAVAEHLADQLLLPMALAGGGSFTTPCMTEHLQSNIRVIEAFLPVRIEARPLSEQVLQVQCHALS.

ATP contacts are provided by residues Gln102 and 283-287 (HLADQ). His308 acts as the Tele-AMP-histidine intermediate in catalysis.

This sequence belongs to the RNA 3'-terminal cyclase family. Type 1 subfamily.

It localises to the cytoplasm. It catalyses the reaction a 3'-end 3'-phospho-ribonucleotide-RNA + ATP = a 3'-end 2',3'-cyclophospho-ribonucleotide-RNA + AMP + diphosphate. In terms of biological role, catalyzes the conversion of 3'-phosphate to a 2',3'-cyclic phosphodiester at the end of RNA. The mechanism of action of the enzyme occurs in 3 steps: (A) adenylation of the enzyme by ATP; (B) transfer of adenylate to an RNA-N3'P to produce RNA-N3'PP5'A; (C) and attack of the adjacent 2'-hydroxyl on the 3'-phosphorus in the diester linkage to produce the cyclic end product. The biological role of this enzyme is unknown but it is likely to function in some aspects of cellular RNA processing. This Pseudomonas fluorescens (strain ATCC BAA-477 / NRRL B-23932 / Pf-5) protein is RNA 3'-terminal phosphate cyclase.